The primary structure comprises 132 residues: Small ribosomal subunit protein uS8 (132 aa).

The protein belongs to the universal ribosomal protein uS8 family. In terms of assembly, part of the 30S ribosomal subunit. Contacts proteins S5 and S12.

Functionally, one of the primary rRNA binding proteins, it binds directly to 16S rRNA central domain where it helps coordinate assembly of the platform of the 30S subunit. In Rubrobacter xylanophilus (strain DSM 9941 / JCM 11954 / NBRC 16129 / PRD-1), this protein is Small ribosomal subunit protein uS8.